Reading from the N-terminus, the 77-residue chain is MSRTIYLSTPSGAGDHLLESLFKEAKKEERKDRRLAVSIRLEDLAVHITNSDMTGKEAAELLRREATRFENESQELH.

This is an uncharacterized protein from Escherichia phage 186 (Bacteriophage 186).